The chain runs to 428 residues: Enolase (428 aa).

Gln-163 contacts (2R)-2-phosphoglycerate. The active-site Proton donor is the Glu-205. Residues Asp-242, Glu-286, and Asp-313 each coordinate Mg(2+). 4 residues coordinate (2R)-2-phosphoglycerate: Lys-338, Arg-367, Ser-368, and Lys-389. The active-site Proton acceptor is the Lys-338.

The protein belongs to the enolase family. The cofactor is Mg(2+).

The protein resides in the cytoplasm. It localises to the secreted. Its subcellular location is the cell surface. The catalysed reaction is (2R)-2-phosphoglycerate = phosphoenolpyruvate + H2O. It participates in carbohydrate degradation; glycolysis; pyruvate from D-glyceraldehyde 3-phosphate: step 4/5. Functionally, catalyzes the reversible conversion of 2-phosphoglycerate (2-PG) into phosphoenolpyruvate (PEP). It is essential for the degradation of carbohydrates via glycolysis. The polypeptide is Enolase (Bordetella petrii (strain ATCC BAA-461 / DSM 12804 / CCUG 43448)).